Consider the following 515-residue polypeptide: 2-isopropylmalate synthase (515 aa).

The Pyruvate carboxyltransferase domain maps to 4-266; that stretch reads IKFFDTTLRD…ETRLNLQEIK (263 aa). Residues Asp-13, His-201, His-203, and Asn-237 each contribute to the Mn(2+) site. Residues 391-515 form a regulatory domain region; it reads QLSSIQVQYG…RGENEKVATP (125 aa).

It belongs to the alpha-IPM synthase/homocitrate synthase family. LeuA type 1 subfamily. Homodimer. Requires Mn(2+) as cofactor.

It localises to the cytoplasm. The enzyme catalyses 3-methyl-2-oxobutanoate + acetyl-CoA + H2O = (2S)-2-isopropylmalate + CoA + H(+). It functions in the pathway amino-acid biosynthesis; L-leucine biosynthesis; L-leucine from 3-methyl-2-oxobutanoate: step 1/4. Catalyzes the condensation of the acetyl group of acetyl-CoA with 3-methyl-2-oxobutanoate (2-ketoisovalerate) to form 3-carboxy-3-hydroxy-4-methylpentanoate (2-isopropylmalate). In Geobacillus kaustophilus (strain HTA426), this protein is 2-isopropylmalate synthase.